A 174-amino-acid chain; its full sequence is Glutamyl-tRNA(Gln) amidotransferase subunit F, mitochondrial (174 aa).

The protein belongs to the GatF family. Subunit of the heterotrimeric GatFAB amidotransferase (AdT) complex, composed of A, B and F subunits.

It localises to the mitochondrion inner membrane. The enzyme catalyses L-glutamyl-tRNA(Gln) + L-glutamine + ATP + H2O = L-glutaminyl-tRNA(Gln) + L-glutamate + ADP + phosphate + H(+). Functionally, allows the formation of correctly charged Gln-tRNA(Gln) through the transamidation of misacylated Glu-tRNA(Gln) in the mitochondria. The reaction takes place in the presence of glutamine and ATP through an activated gamma-phospho-Glu-tRNA(Gln). Required for proper protein synthesis within the mitochondrion. This chain is Glutamyl-tRNA(Gln) amidotransferase subunit F, mitochondrial, found in Kluyveromyces lactis (strain ATCC 8585 / CBS 2359 / DSM 70799 / NBRC 1267 / NRRL Y-1140 / WM37) (Yeast).